Here is a 349-residue protein sequence, read N- to C-terminus: D-alanine--D-alanine ligase (349 aa).

The region spanning 132–335 (KHVFEAVGVP…YSDLIEKLVD (204 aa)) is the ATP-grasp domain. 162–217 (VEKLEFPVFVKPANMGSSVGISKVDDLADLQPALSEAYKYDNRVVIEQGVDAREIE) is a binding site for ATP. The Mg(2+) site is built by Asp289, Glu302, and Asn304.

The protein belongs to the D-alanine--D-alanine ligase family. Requires Mg(2+) as cofactor. Mn(2+) serves as cofactor.

The protein localises to the cytoplasm. The catalysed reaction is 2 D-alanine + ATP = D-alanyl-D-alanine + ADP + phosphate + H(+). Its pathway is cell wall biogenesis; peptidoglycan biosynthesis. Its function is as follows. Cell wall formation. This is D-alanine--D-alanine ligase from Lactococcus lactis subsp. cremoris (strain SK11).